A 96-amino-acid chain; its full sequence is Putative membrane protein insertion efficiency factor (96 aa).

This sequence belongs to the UPF0161 family.

The protein localises to the cell inner membrane. Could be involved in insertion of integral membrane proteins into the membrane. The chain is Putative membrane protein insertion efficiency factor from Borreliella afzelii (strain PKo) (Borrelia afzelii).